The following is a 243-amino-acid chain: Carboxy-S-adenosyl-L-methionine synthase (243 aa).

Residues Tyr-40, 65-67 (GCS), 90-91 (DN), 118-119 (DI), Asn-133, and Arg-200 each bind S-adenosyl-L-methionine.

This sequence belongs to the class I-like SAM-binding methyltransferase superfamily. Cx-SAM synthase family. In terms of assembly, homodimer.

It catalyses the reaction prephenate + S-adenosyl-L-methionine = carboxy-S-adenosyl-L-methionine + 3-phenylpyruvate + H2O. Catalyzes the conversion of S-adenosyl-L-methionine (SAM) to carboxy-S-adenosyl-L-methionine (Cx-SAM). This chain is Carboxy-S-adenosyl-L-methionine synthase, found in Shewanella sp. (strain ANA-3).